Here is a 154-residue protein sequence, read N- to C-terminus: Putative F-box protein At2g11200 (154 aa).

The 47-residue stretch at 5-51 (TTAMSDLPRDLEEEVLSRVQLASLRAVRTTCKKWNRRLSKYRFTKKY) folds into the F-box domain.

This is Putative F-box protein At2g11200 from Arabidopsis thaliana (Mouse-ear cress).